We begin with the raw amino-acid sequence, 7067 residues long: Replicase polyprotein 1ab (7067 aa).

The CoV Nsp1 globular domain maps to 12–127 (THVQLSLPVL…YRNVLLRKNG (116 aa)). Residues 148–179 (ELGTDPIEDYEQNWNTKHGSGALRELTRELNG) enclose the BetaCoV Nsp1 C-terminal domain. The CoV Nsp2 N-terminal domain maps to 183 to 456 (TRYVDNNFCG…NEDLLEILNR (274 aa)). Zn(2+) contacts are provided by cysteine 200, cysteine 231, histidine 234, histidine 236, cysteine 323, cysteine 326, cysteine 341, cysteine 344, cysteine 370, cysteine 373, histidine 382, and cysteine 416. The segment at 200–236 (CIKDFLARAGKSMCTLSEQLDYIESKRGVYCCREHEH) is C2H2. The tract at residues 323-344 (CNHCDEVSWQTCDFLKATCEQC) is C4. The tract at residues 370 to 416 (CPACQDPEVGPEHSVADYHNHSNIETRLRKGGRTKCFGGCVFSYVGC) is C2HC. Residues 458–688 (RVNINIVGDF…LGVVNKALEM (231 aa)) form the CoV Nsp2 middle domain. In terms of domain architecture, CoV Nsp2 C-terminal spans 690–818 (LDQVTIAGTK…TNNVFRLKGG (129 aa)). In terms of domain architecture, Ubiquitin-like 1 spans 822 to 930 (KGVTFGEDTV…MYCSFYPPDE (109 aa)). 3 Macro domains span residues 998-1164 (VNQF…LDYL), 1201-1329 (KIKA…LPSE), and 1337-1464 (VLGT…TSSS). A DPUP domain is found at 1466-1532 (TPEEYFVETT…PLDKLKSLLS (67 aa)). Residues 1536–1591 (VKTIKVFTTVDNTNLHTHIVDMSMTYGQQFGPTYLDGADVTKIKPHVNHEGKTFFV) enclose the Ubiquitin-like 2 domain. The Peptidase C16 domain occupies 1605-1869 (YYHTIDESFL…YTEIEPKLDG (265 aa)). Cysteine 1645 acts as the For PL-PRO activity in catalysis. Residues cysteine 1723, cysteine 1726, cysteine 1758, and cysteine 1760 each coordinate Zn(2+). The segment at 1723–1760 (CKHCGQKTTTLKGVEAVMYMGTLSYDELKTGVSIPCVC) adopts a C4-type zinc-finger fold. Residues histidine 1806 and aspartate 1820 each act as for PL-PRO activity in the active site. The region spanning 1882–1992 (PIDLVPTQPM…CLWSTKPVDT (111 aa)) is the Nucleic acid-binding domain. One can recognise a G2M domain in the interval 2017–2126 (TTSEEVVENP…LGQTAVITSN (110 aa)). Residues 2086-2365 (LALGLKTLAT…IFFASFYYVW (280 aa)) are HD1. The helical transmembrane segment at 2197–2217 (LFTIVMWLLLLSICLGSLTYV) threads the bilayer. A 3Ecto domain is found at 2218–2288 (TAVLGVCLSS…QVTISSYKLD (71 aa)). Disulfide bonds link cysteine 2234–cysteine 2262 and cysteine 2253–cysteine 2259. A run of 2 helical transmembrane segments spans residues 2298 to 2318 (WLLAYMLFTKFFYLLGLSAIM) and 2345 to 2365 (MAPVSAMVRMYIFFASFYYVW). The Y1 stretch occupies residues 2366 to 2456 (KSYVHIMDGC…QFKRPINPTD (91 aa)). One can recognise a CoV Nsp3 Y domain in the interval 2366 to 2734 (KSYVHIMDGC…ITTKISLKGG (369 aa)). Zn(2+) is bound by residues histidine 2370, cysteine 2375, cysteine 2380, cysteine 2383, cysteine 2416, histidine 2419, cysteine 2423, and cysteine 2426. Positions 2370–2383 (HIMDGCTSSTCMMC) are ZF1. Positions 2416 to 2426 (CKAHNWNCLNC) are ZF2. Positions 2457 to 2551 (QSAYVVDSVT…LLDQALVSDV (95 aa)) are Y2. Residues 2457–2734 (QSAYVVDSVT…ITTKISLKGG (278 aa)) are coV-Y. The segment at 2552-2633 (GDSTEVSVKM…ECLKLSHHSD (82 aa)) is Y3. The Y4 stretch occupies residues 2634-2734 (IEVTGDSCNN…ITTKISLKGG (101 aa)). 7 consecutive transmembrane segments (helical) span residues 2744–2764 (LLKVTLLCVLAALFCYVIMPV), 2986–3006 (PGVFCGVDAMNLIANIFTPLV), 3016–3036 (ASVVAGGIIAILVTCAAYYFM), 3048–3068 (VVAANALLFLMSFTILCLAPA), 3071–3091 (FLPGVYSIFYLYLTFYFTNDV), 3099–3119 (WFAMFSPIVPFWITAIYVFCI), and 3136–3156 (VMFNGVTFSTFEEAALCTFLL). The segment at 2749-3156 (LLCVLAALFC…EEAALCTFLL (408 aa)) is HD2. Residues 3136–3234 (VMFNGVTFST…QTSITSAVLQ (99 aa)) enclose the Nsp4C domain. The Peptidase C30 domain maps to 3235–3540 (SGFRKMAFPS…VRQCSGVTFQ (306 aa)). Residues histidine 3275 and cysteine 3379 each act as for 3CL-PRO activity in the active site. Helical transmembrane passes span 3558–3578 (FLTSLLILVQSTQWSLFFFVY), 3580–3600 (NAFLPFALGIMAVAACAMLLV), 3606–3626 (FLCLFLLPSLATVAYFNMVYM), 3652–3672 (DCVMYASALVLLILMTARTVY), 3679–3698 (VWTLMNVITLVYKVYYGNSL), 3722–3742 (IMFLARAIVFVCVEYYPLLFI), and 3750–3770 (IMLVYCFLGYCCCCYFGLFCL). Positions 3558 to 3770 (FLTSLLILVQ…CCCYFGLFCL (213 aa)) are HD3. Residues 3831 to 3913 (SKMSDVKCTS…EMLDNRATLQ (83 aa)) enclose the RdRp Nsp7 cofactor domain. Positions 3914-4111 (AIASEFSSLP…LRANSAVKLQ (198 aa)) constitute a RdRp Nsp8 cofactor domain. Positions 4112–4224 (NNELSPVALR…GSLAATVRLQ (113 aa)) constitute a Nsp9 ssRNA-binding domain. Positions 4225-4363 (AGNATEVPAN…CDQLREPMMQ (139 aa)) constitute an ExoN/MTase coactivator domain. Positions 4298, 4301, 4307, 4314, 4341, 4344, 4352, and 4354 each coordinate Zn(2+). Zinc fingers lie at residues 4298 to 4314 (CLYCRCHIDHPNPKGFC) and 4341 to 4354 (CTVCGMWKGYGCSC). The region spanning 4370 to 4624 (FLNRVCGVSA…AAESHMDADL (255 aa)) is the NiRAN domain. 2 residues coordinate Mn(2+): asparagine 4572 and aspartate 4581. A Nsp12 Interface domain is found at 4629–4727 (VKWDLLKYDF…HNQDVNLHSS (99 aa)). Zn(2+) contacts are provided by histidine 4658, cysteine 4664, cysteine 4669, cysteine 4673, and cysteine 4850. The 568-residue stretch at 4728-5295 (RLSFKELLVY…AMYTPHTVLQ (568 aa)) folds into the Nsp12 RNA-dependent RNA polymerase domain. Residues 4730–4944 (SFKELLVYAA…HQKLLKSIAA (215 aa)) are rdRp Fingers N-ter. The rdRp Palm N-ter stretch occupies residues 4945–4983 (TRGATVVIGTSKFYGGWHNMLKTVYSDVESPHLMGWDYP). In terms of domain architecture, RdRp catalytic spans 4975-5137 (PHLMGWDYPK…CYNSNYAAQG (163 aa)). The segment at 4984–5042 (KCDRAMPNMLRIMASLILARKHSTCCNLSHRFYRLANECAQVLSEMVMCGGSLYVKPGG) is rdRp Fingers C-ter. Zn(2+)-binding residues include histidine 5005, cysteine 5008, and cysteine 5009. The rdRp Palm C-ter stretch occupies residues 5043-5178 (TSSGDATTAY…TRGPHEFCSQ (136 aa)). Active-site residues include serine 5122, aspartate 5123, and aspartate 5124. The segment at 5179–5295 (HTMLVKQGDD…AMYTPHTVLQ (117 aa)) is rdRp Thumb. The CV ZBD domain occupies 5296 to 5408 (AVGACVLCNS…TDFNAIATCD (113 aa)). Positions 5300, 5303, 5311, 5314, 5321, 5324, 5328, 5334, 5345, 5350, 5367, and 5370 each coordinate Zn(2+). The region spanning 5552 to 5733 (NISNEFSSNV…MKTIGPDMFL (182 aa)) is the (+)RNA virus helicase ATP-binding domain. 5577-5584 (GPPGTGKS) is an ATP binding site. One can recognise a (+)RNA virus helicase C-terminal domain in the interval 5734-5903 (GTCRRCPAEI…TLQAENVTGL (170 aa)). Residues 5968–6183 (MFITREEAIR…RCLAVHECFV (216 aa)) enclose the ExoN domain. Residues aspartate 5986, glutamate 5988, and glutamate 6087 contribute to the active site. Cysteine 6103, cysteine 6106, cysteine 6122, histidine 6125, histidine 6153, cysteine 6157, and histidine 6160 together coordinate Zn(2+). Active-site residues include histidine 6164 and aspartate 6169. Position 6175 (cysteine 6175) interacts with Zn(2+). Residues 6192-6423 (YPIIGDELKI…NLWNTFTKLQ (232 aa)) enclose the N7-MTase domain. Residue 6227–6233 (DIGNPKA) coordinates S-adenosyl-L-methionine. Positions 6310-6324 (CDGGSLYVNKHAFHT) are gpppA-binding. Positions 6348, 6369, 6380, and 6383 each coordinate Zn(2+). A Nsp15 N-terminal oligomerization domain is found at 6424 to 6484 (SLENVAYNVV…NVAFELWAKR (61 aa)). The AV-Nsp11N/CoV-Nsp15M domain occupies 6485-6610 (NIKPVPEIKI…YFKKVDGIIQ (126 aa)). The 140-residue stretch at 6627–6766 (KPRSQMETDF…KDGHVETFYP (140 aa)) folds into the NendoU domain. Residues histidine 6657, histidine 6672, lysine 6712, lysine 6815, aspartate 6899, lysine 6939, and glutamate 6972 contribute to the active site. The 295-residue stretch at 6771–7065 (SQAWQPGVAM…RVVVSSDILV (295 aa)) folds into the Nidovirus-type SAM-dependent 2'-O-MTase domain.

It belongs to the coronaviruses polyprotein 1ab family. Interacts with host PHB and PHB2. As to quaternary structure, interacts with papain-like protease nsp3 and non-structural protein 6. In terms of assembly, monomer. Homodimer. Only the homodimer shows catalytic activity. Interacts with nsp8 and nsp12 to form the replication-transcription complex (RTC): nsp12, nsp7, two subunits of nsp8, and up to two subunits of nsp13. As to quaternary structure, interacts with nsp7, nsp13 and nsp12 to form the replication-transcription complex (RTC): nsp12, nsp7, two subunits of nsp8, and up to two subunits of nsp13. In terms of assembly, interacts with nsp12. Interacts with proofreading exoribonuclease nsp14 and 2'-O-methyltransferase nsp16; these interactions enhance nsp14 and nsp16 enzymatic activities. As to quaternary structure, interacts with nsp7 and nsp8 to form the replication-transcription complex (RTC): nsp12, nsp7, two subunits of nsp8, and up to two subunits of nsp13. Interacts with nsp9. In terms of assembly, interacts with nsp8 to form the replication-transcription complex (RTC): nsp12, nsp7, two subunits of nsp8, and up to two subunits of nsp13. It depends on Mn(2+) as a cofactor. Requires Mg(2+) as cofactor. Post-translationally, specific enzymatic cleavages in vivo by its own proteases yield mature proteins. 3CL-PRO and PL-PRO proteinases are autocatalytically processed.

It is found in the host membrane. It localises to the host cytoplasm. Its subcellular location is the host perinuclear region. The protein resides in the host endoplasmic reticulum-Golgi intermediate compartment. The catalysed reaction is RNA(n) + a ribonucleoside 5'-triphosphate = RNA(n+1) + diphosphate. The enzyme catalyses ATP + H2O = ADP + phosphate + H(+). It catalyses the reaction Thiol-dependent hydrolysis of ester, thioester, amide, peptide and isopeptide bonds formed by the C-terminal Gly of ubiquitin (a 76-residue protein attached to proteins as an intracellular targeting signal).. It carries out the reaction a 5'-end (N(7)-methyl 5'-triphosphoguanosine)-ribonucleoside in mRNA + S-adenosyl-L-methionine = a 5'-end (N(7)-methyl 5'-triphosphoguanosine)-(2'-O-methyl-ribonucleoside) in mRNA + S-adenosyl-L-homocysteine + H(+). The catalysed reaction is uridylyl-uridylyl-ribonucleotide-RNA = a 3'-end uridylyl-2',3'-cyclophospho-uridine-RNA + a 5'-end dephospho-ribonucleoside-RNA. The enzyme catalyses a 5'-end diphospho-ribonucleoside in mRNA + GTP + H(+) = a 5'-end (5'-triphosphoguanosine)-ribonucleoside in mRNA + diphosphate. It catalyses the reaction a 5'-end (5'-triphosphoguanosine)-ribonucleoside in mRNA + S-adenosyl-L-methionine = a 5'-end (N(7)-methyl 5'-triphosphoguanosine)-ribonucleoside in mRNA + S-adenosyl-L-homocysteine. Its function is as follows. The replicase polyprotein of coronaviruses is a multifunctional protein: it contains the activities necessary for the transcription of negative stranded RNA, leader RNA, subgenomic mRNAs and progeny virion RNA as well as proteinases responsible for the cleavage of the polyprotein into functional products. Inhibits host translation by interacting with the 40S ribosomal subunit. The nsp1-40S ribosome complex further induces an endonucleolytic cleavage near the 5'UTR of host mRNAs, targeting them for degradation. Viral mRNAs are not susceptible to nsp1-mediated endonucleolytic RNA cleavage thanks to the presence of a 5'-end leader sequence and are therefore protected from degradation. By suppressing host gene expression, nsp1 facilitates efficient viral gene expression in infected cells and evasion from host immune response. In terms of biological role, may play a role in the modulation of host cell survival signaling pathway by interacting with host PHB and PHB2. Indeed, these two proteins play a role in maintaining the functional integrity of the mitochondria and protecting cells from various stresses. Functionally, responsible for the cleavages located at the N-terminus of the replicase polyprotein. In addition, PL-PRO possesses a deubiquitinating/deISGylating activity and processes both 'Lys-48'- and 'Lys-63'-linked polyubiquitin chains from cellular substrates. Participates together with nsp4 in the assembly of virally-induced cytoplasmic double-membrane vesicles necessary for viral replication. Antagonizes innate immune induction of type I interferon by blocking the phosphorylation, dimerization and subsequent nuclear translocation of host IRF3. Also prevents host NF-kappa-B signaling. Its function is as follows. Participates in the assembly of virally-induced cytoplasmic double-membrane vesicles necessary for viral replication. Cleaves the C-terminus of replicase polyprotein at 11 sites. Recognizes substrates containing the core sequence [ILMVF]-Q-|-[SGACN]. Also able to bind an ADP-ribose-1''-phosphate (ADRP). In terms of biological role, plays a role in the initial induction of autophagosomes from host endoplasmic reticulum. Later, limits the expansion of these phagosomes that are no longer able to deliver viral components to lysosomes. Functionally, forms a hexadecamer with nsp8 (8 subunits of each) that may participate in viral replication by acting as a primase. Alternatively, may synthesize substantially longer products than oligonucleotide primers. Its function is as follows. Forms a hexadecamer with nsp7 (8 subunits of each) that may participate in viral replication by acting as a primase. Alternatively, may synthesize substantially longer products than oligonucleotide primers. Forms a primer, NSP9-pU, which is utilized by the polymerase for the initiation of RNA chains. Interacts with ribosome signal recognition particle RNA (SRP). Together with NSP8, suppress protein integration into the cell membrane, thereby disrupting host immune defenses. In terms of biological role, plays a pivotal role in viral transcription by stimulating both nsp14 3'-5' exoribonuclease and nsp16 2'-O-methyltransferase activities. Therefore plays an essential role in viral mRNAs cap methylation. Functionally, RNA-directed RNA polymerase that catalyzes the transcription of viral genomic and subgenomic RNAs. Acts in complex with nsp7 and nsp8 to transcribe both the minus and positive strands of genomic RNA. The kinase-like NiRAN domain of NSP12 attaches one or more nucleotides to the amino terminus of NSP9, forming a covalent RNA-protein intermediate that serves as transcription/replication primer. Subgenomic RNAs (sgRNAs) are formed by discontinuous transcription: The polymerase has the ability to pause at transcription-regulating sequences (TRS) and jump to the leader TRS, resulting in a major deletion. This creates a series of subgenomic RNAs that are replicated, transcribed and translated. In addition, Nsp12 is a subunit of the viral RNA capping enzyme that catalyzes the RNA guanylyltransferase reaction for genomic and sub-genomic RNAs. Subsequently, the NiRAN domain transfers RNA to GDP, and forms the core cap structure GpppA-RNA. Its function is as follows. Multi-functional protein with a zinc-binding domain in N-terminus displaying RNA and DNA duplex-unwinding activities with 5' to 3' polarity. Activity of helicase is dependent on magnesium. Plays a role in viral RNA synthesis through two distinct activities. The N7-guanine methyltransferase activity plays a role in the formation of the cap structure GpppA-RNA. The proofreading exoribonuclease reduces the sensitivity of the virus to RNA mutagens during replication. This activity acts on both ssRNA and dsRNA in a 3'-5' direction. In terms of biological role, plays a role in viral transcription/replication and prevents the simultaneous activation of host cell dsRNA sensors, such as MDA5/IFIH1, OAS, and PKR. Acts by degrading the 5'-polyuridines generated during replication of the poly(A) region of viral genomic and subgenomic RNAs. Catalyzes a two-step reaction in which a 2'3'-cyclic phosphate (2'3'-cP) is first generated by 2'-O transesterification, which is then hydrolyzed to a 3'-phosphate (3'-P). If not degraded, poly(U) RNA would hybridize with poly(A) RNA tails and activate host dsRNA sensors. Functionally, methyltransferase that mediates mRNA cap 2'-O-ribose methylation to the 5'-cap structure of viral mRNAs. N7-methyl guanosine cap is a prerequisite for binding of nsp16. Therefore plays an essential role in viral mRNAs cap methylation which is essential to evade immune system. The sequence is that of Replicase polyprotein 1ab (rep) from Bat coronavirus HKU3 (BtCoV).